The following is a 158-amino-acid chain: Urease accessory protein UreE (158 aa).

Belongs to the UreE family.

The protein localises to the cytoplasm. Functionally, involved in urease metallocenter assembly. Binds nickel. Probably functions as a nickel donor during metallocenter assembly. The chain is Urease accessory protein UreE from Microcystis aeruginosa (strain NIES-843 / IAM M-2473).